We begin with the raw amino-acid sequence, 331 residues long: Taste receptor type 2 member 38 (331 aa).

The Extracellular portion of the chain corresponds to Met1–Ser17. Residues Phe18–Leu38 traverse the membrane as a helical segment. The Cytoplasmic portion of the chain corresponds to Val39–Asp54. The helical transmembrane segment at Ile55–Ala75 threads the bilayer. At Ile76 to Ala94 the chain is on the extracellular side. Residues Ile95 to Leu115 traverse the membrane as a helical segment. Over Leu116–Gln142 the chain is Cytoplasmic. Residues Met143–Phe163 traverse the membrane as a helical segment. Over Ser164–Asn198 the chain is Extracellular. Asn177 is a glycosylation site (N-linked (GlcNAc...) asparagine). A helical transmembrane segment spans residues Val199–Leu219. The Cytoplasmic segment spans residues Gly220–Arg243. The chain crosses the membrane as a helical span at residues Ala244–Ile264. The Extracellular portion of the chain corresponds to Ser265 to Gly276. Residues Gly277–Ile297 form a helical membrane-spanning segment. At Ser298–Leu331 the chain is on the cytoplasmic side.

Belongs to the G-protein coupled receptor T2R family. Expressed in tongue, stomach and duodenum.

It localises to the membrane. In terms of biological role, putative taste receptor which may play a role in the perception of bitterness. This is Taste receptor type 2 member 38 (Tas2r38) from Rattus norvegicus (Rat).